A 292-amino-acid chain; its full sequence is ATP synthase subunit a (292 aa).

7 consecutive transmembrane segments (helical) span residues 39–59 (QILG…FYKL), 73–93 (FLLL…DLLG), 102–122 (YFLM…LGGI), 128–148 (SLTF…VMGI), 172–192 (TFIP…SISL), 196–216 (GNIL…IFIF), and 231–251 (VFAG…AGVL).

The protein belongs to the ATPase A chain family. In terms of assembly, F-type ATPases have 2 components, CF(1) - the catalytic core - and CF(0) - the membrane proton channel. CF(1) has five subunits: alpha(3), beta(3), gamma(1), delta(1), epsilon(1). CF(0) has three main subunits: a(1), b(2) and c(9-12). The alpha and beta chains form an alternating ring which encloses part of the gamma chain. CF(1) is attached to CF(0) by a central stalk formed by the gamma and epsilon chains, while a peripheral stalk is formed by the delta and b chains.

It is found in the cell membrane. Its function is as follows. Key component of the proton channel; it plays a direct role in the translocation of protons across the membrane. This chain is ATP synthase subunit a, found in Mycoplasma genitalium (strain ATCC 33530 / DSM 19775 / NCTC 10195 / G37) (Mycoplasmoides genitalium).